The primary structure comprises 1033 residues: Tyrosine-protein kinase-like otk (1033 aa).

An N-terminal signal peptide occupies residues 1 to 22 (MTARMISIYGLVLASMMASVLA). The Extracellular segment spans residues 23–581 (SSSRFQRLPQ…GGDGFLVTRA (559 aa)). 5 Ig-like C2-type domains span residues 25–114 (SRFQ…AKLS), 113–199 (LSVI…RVMS), 251–365 (PEDL…VPVS), 368–463 (PGVL…VAIN), and 468–558 (PKFS…VQLI). Asn-39 carries N-linked (GlcNAc...) asparagine glycosylation. Intrachain disulfides connect Cys-46–Cys-95, Cys-137–Cys-188, Cys-276–Cys-354, and Cys-399–Cys-447. 7 N-linked (GlcNAc...) asparagine glycosylation sites follow: Asn-336, Asn-417, Asn-429, Asn-444, Asn-457, Asn-512, and Asn-524. A disulfide bond links Cys-490 and Cys-542. Residues 582–602 (VLITMTVALAYIVLVVGLMLW) traverse the membrane as a helical segment. Residues 603–1033 (CRYRRQARKA…LSKAMQSAEK (431 aa)) are Cytoplasmic-facing. Disordered regions lie at residues 617-679 (LSTK…KKSA) and 718-760 (SPSD…KTSM). Positions 655–673 (KSSGDAQKSDDTACSQQSR) are enriched in polar residues. Ser-678 bears the Phosphoserine mark. Positions 692 to 1028 (LSELIQIGRG…QLGAALSKAM (337 aa)) constitute a Protein kinase; inactive domain. The span at 720 to 731 (SDKDADTEKQHS) shows a compositional bias: basic and acidic residues.

The protein belongs to the protein kinase superfamily. Tyr protein kinase family. Insulin receptor subfamily. In terms of assembly, interacts with plexA; component of a receptor complex that mediates the repulsive signaling in response to Semaphorin ligands.

It is found in the cell membrane. Acts as a calcium-dependent, homophilic cell adhesion molecule that regulates neural recognition during the development of the nervous system. Component of the repulsive Plexin signaling response to regulate motor axon guidance at the embryonic stage. Also component of a receptor complex that is required in the adult visual system to innervate the lamina layer; specific targeting of R1-R6 axons. The chain is Tyrosine-protein kinase-like otk from Drosophila yakuba (Fruit fly).